We begin with the raw amino-acid sequence, 170 residues long: Lipoprotein signal peptidase (170 aa).

Helical transmembrane passes span 9–29, 72–92, and 95–117; these read FNIF…KYLV, IFFI…ALKE, and CITR…DRLF. Active-site residues include Asp-124 and Asp-146. Residues 143 to 163 traverse the membrane as a helical segment; the sequence is NFADSYVVIGMILFLVYDFFI.

It belongs to the peptidase A8 family.

The protein localises to the cell inner membrane. It carries out the reaction Release of signal peptides from bacterial membrane prolipoproteins. Hydrolyzes -Xaa-Yaa-Zaa-|-(S,diacylglyceryl)Cys-, in which Xaa is hydrophobic (preferably Leu), and Yaa (Ala or Ser) and Zaa (Gly or Ala) have small, neutral side chains.. Its pathway is protein modification; lipoprotein biosynthesis (signal peptide cleavage). In terms of biological role, this protein specifically catalyzes the removal of signal peptides from prolipoproteins. This is Lipoprotein signal peptidase from Borrelia garinii subsp. bavariensis (strain ATCC BAA-2496 / DSM 23469 / PBi) (Borreliella bavariensis).